Consider the following 193-residue polypeptide: MTAVCLVRHGETDWNLQQKCQGKTDIPLNATGERQARETGEYVKDFSWDIIVTSPLKRAKRTAEIINEYLHLPIVEMDDFKERDYGDAEGMPLEERTKRYPDNIYPNMETLEELTDRLMGGLAKVNQAYPNKKVLIVAHGAAIHALLTEISGGDPELQSTRLVNACLSNIEFAEEKWRIKDYNINSHLSGFIK.

Arginine 8 contributes to the substrate binding site. Histidine 9 acts as the Tele-phosphohistidine intermediate in catalysis. Asparagine 15, glutamine 21, and arginine 58 together coordinate substrate. Glutamate 82 acts as the Proton donor/acceptor in catalysis. A substrate-binding site is contributed by histidine 139.

Belongs to the phosphoglycerate mutase family. GpmB subfamily.

Functionally, phosphatase with broad substrate specificity. Does not have phosphoglycerate mutase activity. This is an uncharacterized protein from Bacillus subtilis (strain 168).